Here is a 261-residue protein sequence, read N- to C-terminus: Tryptophan synthase alpha chain (261 aa).

Active-site proton acceptor residues include Glu-49 and Asp-60.

This sequence belongs to the TrpA family. Tetramer of two alpha and two beta chains.

The catalysed reaction is (1S,2R)-1-C-(indol-3-yl)glycerol 3-phosphate + L-serine = D-glyceraldehyde 3-phosphate + L-tryptophan + H2O. The protein operates within amino-acid biosynthesis; L-tryptophan biosynthesis; L-tryptophan from chorismate: step 5/5. Functionally, the alpha subunit is responsible for the aldol cleavage of indoleglycerol phosphate to indole and glyceraldehyde 3-phosphate. The sequence is that of Tryptophan synthase alpha chain from Roseiflexus castenholzii (strain DSM 13941 / HLO8).